A 772-amino-acid polypeptide reads, in one-letter code: Carnitine O-palmitoyltransferase 1, muscle isoform (772 aa).

The Cytoplasmic segment spans residues 1 to 47 (MAEAHQAVAFQFTVTPEGVDFRLSREALKHIYLSGINSWKKRLIRIK). Residues 48–73 (NGILRGVYPGSPTSWLVVASATAGSS) traverse the membrane as a helical segment. Residues 74–102 (YYNVDISMGLVNHIQRCLPERYGPYWTPQ) lie on the Mitochondrial intermembrane side of the membrane. A helical membrane pass occupies residues 103–122 (TRALLSMAVVSTGVWMIGIF). At 123-772 (FFRQTLKLLL…DLFQVPKTDS (650 aa)) the chain is on the cytoplasmic side. The active-site Proton acceptor is the His473. CoA is bound at residue 555-567 (GKGLIKKCRTSPD). (R)-carnitine is bound by residues Tyr589 and Thr602.

The protein belongs to the carnitine/choline acetyltransferase family.

The protein resides in the mitochondrion outer membrane. The enzyme catalyses (R)-carnitine + hexadecanoyl-CoA = O-hexadecanoyl-(R)-carnitine + CoA. The protein operates within lipid metabolism; fatty acid beta-oxidation. In terms of biological role, catalyzes the transfer of the acyl group of long-chain fatty acid-CoA conjugates onto carnitine, an essential step for the mitochondrial uptake of long-chain fatty acids and their subsequent beta-oxidation in the mitochondrion. In Sus scrofa (Pig), this protein is Carnitine O-palmitoyltransferase 1, muscle isoform (CPT1B).